Reading from the N-terminus, the 327-residue chain is Phosphate acyltransferase (327 aa).

This sequence belongs to the PlsX family. In terms of assembly, homodimer. Probably interacts with PlsY.

It is found in the cytoplasm. It carries out the reaction a fatty acyl-[ACP] + phosphate = an acyl phosphate + holo-[ACP]. It participates in lipid metabolism; phospholipid metabolism. In terms of biological role, catalyzes the reversible formation of acyl-phosphate (acyl-PO(4)) from acyl-[acyl-carrier-protein] (acyl-ACP). This enzyme utilizes acyl-ACP as fatty acyl donor, but not acyl-CoA. This Thermosipho africanus (strain TCF52B) protein is Phosphate acyltransferase.